Here is a 231-residue protein sequence, read N- to C-terminus: UPF0758 protein YsxA (231 aa).

Residues Val109–Leu231 form the MPN domain. 3 residues coordinate Zn(2+): His180, His182, and Asp193. The short motif at His180–Asp193 is the JAMM motif element.

The protein belongs to the UPF0758 family.

The protein is UPF0758 protein YsxA (ysxA) of Bacillus subtilis (strain 168).